The following is a 223-amino-acid chain: Urease accessory protein UreF (223 aa).

The protein belongs to the UreF family. As to quaternary structure, ureD, UreF and UreG form a complex that acts as a GTP-hydrolysis-dependent molecular chaperone, activating the urease apoprotein by helping to assemble the nickel containing metallocenter of UreC. The UreE protein probably delivers the nickel.

It localises to the cytoplasm. Required for maturation of urease via the functional incorporation of the urease nickel metallocenter. This Paenarthrobacter aurescens (strain TC1) protein is Urease accessory protein UreF.